The primary structure comprises 484 residues: Probable endopeptidase p60 (484 aa).

The signal sequence occupies residues 1-27 (MNMKKATIAATAGIAVTAFAAPTIASA). The region spanning 28–71 (STVVVEAGDTLWGIAQSKGTTVDAIKKANNLTTDKIVPGQKLQV) is the LysM 1 domain. The 65-residue stretch at 80–144 (KTEKSVSATW…VNGKYLTDKA (65 aa)) folds into the SH3b domain. The segment at 150–192 (APTQEVKKETTTQQAAPAAETKTEVKQTTQATTPAPKVAETKE) is disordered. Residues 160–169 (TTQQAAPAAE) are compositionally biased toward low complexity. In terms of domain architecture, LysM 2 spans 201-244 (TTHAVKSGDTIWALSVKYGVSVQDIMSWNNLSSSSIYVGQKLAI). The segment at 254-367 (KAEVKTEAPA…QGSSNNNSNS (114 aa)) is disordered. 2 stretches are compositionally biased toward low complexity: residues 273 to 282 (KENTNTNTAT) and 289 to 367 (ATQQ…NSNS). Residues 311-355 (TNTNANKTNTNTNTNTNTNNTNTNTPSKNTNTNSNTNTNTNSNTN) are 19 X 2 AA tandem repeats of T-N. Residues 366–484 (NSSASAIIAE…GKYLVGFGRV (119 aa)) form the NlpC/P60 domain. Cys-396 functions as the Nucleophile in the catalytic mechanism. His-446 (proton acceptor) is an active-site residue. Residue Asn-458 is part of the active site.

The protein belongs to the peptidase C40 family.

Its subcellular location is the cell surface. The protein resides in the secreted. Functionally, this major extracellular protein may be involved in the invasion of non-professional phagocytic cells by Listeria. This is Probable endopeptidase p60 (iap) from Listeria monocytogenes serovar 1/2a (strain ATCC BAA-679 / EGD-e).